A 155-amino-acid polypeptide reads, in one-letter code: Interleukin-2 (155 aa).

The first 20 residues, 1-20 (MYKIQLLSCIALTLALVANG), serve as a signal peptide directing secretion. Residue T23 is glycosylated (O-linked (GalNAc...) threonine). C79 and C127 form a disulfide bridge.

This sequence belongs to the IL-2 family.

The protein localises to the secreted. Cytokine produced by activated CD4-positive helper T-cells and to a lesser extend activated CD8-positive T-cells and natural killer (NK) cells that plays pivotal roles in the immune response and tolerance. Binds to a receptor complex composed of either the high-affinity trimeric IL-2R (IL2RA/CD25, IL2RB/CD122 and IL2RG/CD132) or the low-affinity dimeric IL-2R (IL2RB and IL2RG). Interaction with the receptor leads to oligomerization and conformation changes in the IL-2R subunits resulting in downstream signaling starting with phosphorylation of JAK1 and JAK3. In turn, JAK1 and JAK3 phosphorylate the receptor to form a docking site leading to the phosphorylation of several substrates including STAT5. This process leads to activation of several pathways including STAT, phosphoinositide-3-kinase/PI3K and mitogen-activated protein kinase/MAPK pathways. Functions as a T-cell growth factor and can increase NK-cell cytolytic activity as well. Promotes strong proliferation of activated B-cells and subsequently immunoglobulin production. Plays a pivotal role in regulating the adaptive immune system by controlling the survival and proliferation of regulatory T-cells, which are required for the maintenance of immune tolerance. Moreover, participates in the differentiation and homeostasis of effector T-cell subsets, including Th1, Th2, Th17 as well as memory CD8-positive T-cells. The polypeptide is Interleukin-2 (IL2) (Bos taurus (Bovine)).